The sequence spans 139 residues: Mitochondrial intermembrane space import and assembly protein 40 (139 aa).

Intrachain disulfides connect C53/C55, C64/C97, and C74/C87. The CHCH domain maps to 61 to 105 (SGPCGEQFKSAFSCFHYSTEDIKGSDCIDQFRAMQECMQKYPDLY). 2 consecutive short sequence motifs (cx9C motif) follow at residues 64 to 74 (CGEQFKSAFSC) and 87 to 97 (CIDQFRAMQEC). The tract at residues 102-139 (PDLYPQDEEEEEEAKPVEPVEETADTKVSAAKEQGTSS) is disordered. Residues 106–124 (PQDEEEEEEAKPVEPVEET) show a composition bias toward acidic residues.

Monomer. Can form homooligomers. Interacts with GFER and forms transient disulfide bonds with GFER. Interacts with MICU1. Interacts with COX19 forming transient intermolecular disulfide bridges. Interacts with COA7 through transient intermolecular disulfide bonds. Interacts with AIFM1; the interaction increases in presence of NADH. Interacts with NDUFB10. Post-translationally, forms intrachain disulfide bridges, but exists in different redox states. Widely expressed. Present at high level in liver and kidney, followed by lung, brain, heart and spleen (at protein level).

It localises to the mitochondrion intermembrane space. Central component of a redox-sensitive mitochondrial intermembrane space import machinery which is required for the biogenesis of respiratory chain complexes. Functions as chaperone and catalyzes the formation of disulfide bonds in substrate proteins, such as COX17, COX19, MICU1 and COA7. Required for the import and folding of small cysteine-containing proteins (small Tim) in the mitochondrial intermembrane space (IMS). Required for the import of COA7 in the IMS. Precursor proteins to be imported into the IMS are translocated in their reduced form into the mitochondria. The oxidized form of CHCHD4/MIA40 forms a transient intermolecular disulfide bridge with the reduced precursor protein, resulting in oxidation of the precursor protein that now contains an intramolecular disulfide bond and is able to undergo folding in the IMS. Reduced CHCHD4/MIA40 is then reoxidized by GFER/ERV1 via a disulfide relay system. Mediates formation of disulfide bond in MICU1 in the IMS, promoting formation of the MICU1-MICU2 heterodimer that regulates mitochondrial calcium uptake. The protein is Mitochondrial intermembrane space import and assembly protein 40 (Chchd4) of Mus musculus (Mouse).